Consider the following 292-residue polypeptide: 4-hydroxybenzoate octaprenyltransferase (292 aa).

9 helical membrane-spanning segments follow: residues 24-44 (IGTL…NAGM), 47-67 (LTNF…GCVI), 97-117 (AISL…MLSV), 119-139 (TILL…MKRY), 145-165 (VVLG…SINA), 171-191 (WLLF…YAMV), 214-234 (HIIG…GALN), 238-258 (LSYW…QVLI), and 270-290 (FLNN…SYPV).

Belongs to the UbiA prenyltransferase family. Mg(2+) serves as cofactor.

It localises to the cell inner membrane. It catalyses the reaction all-trans-octaprenyl diphosphate + 4-hydroxybenzoate = 4-hydroxy-3-(all-trans-octaprenyl)benzoate + diphosphate. It participates in cofactor biosynthesis; ubiquinone biosynthesis. In terms of biological role, catalyzes the prenylation of para-hydroxybenzoate (PHB) with an all-trans polyprenyl group. Mediates the second step in the final reaction sequence of ubiquinone-8 (UQ-8) biosynthesis, which is the condensation of the polyisoprenoid side chain with PHB, generating the first membrane-bound Q intermediate 3-octaprenyl-4-hydroxybenzoate. The sequence is that of 4-hydroxybenzoate octaprenyltransferase from Pseudoalteromonas translucida (strain TAC 125).